A 429-amino-acid polypeptide reads, in one-letter code: Adenylosuccinate synthetase (429 aa).

Residues 12–18 and 40–42 contribute to the GTP site; these read GDEGKGK and GHT. Aspartate 13 serves as the catalytic Proton acceptor. Residues aspartate 13 and glycine 40 each contribute to the Mg(2+) site. Residues 13–16, 38–41, threonine 128, arginine 142, glutamine 223, threonine 238, and arginine 302 each bind IMP; these read DEGK and NAGH. Histidine 41 serves as the catalytic Proton donor. Position 298–304 (298–304) interacts with substrate; the sequence is TTTGRPR. GTP-binding positions include arginine 304, 330-332, and 412-414; these read SID and SVG.

The protein belongs to the adenylosuccinate synthetase family. In terms of assembly, homodimer. Mg(2+) is required as a cofactor.

The protein resides in the cytoplasm. It catalyses the reaction IMP + L-aspartate + GTP = N(6)-(1,2-dicarboxyethyl)-AMP + GDP + phosphate + 2 H(+). The protein operates within purine metabolism; AMP biosynthesis via de novo pathway; AMP from IMP: step 1/2. Plays an important role in the de novo pathway of purine nucleotide biosynthesis. Catalyzes the first committed step in the biosynthesis of AMP from IMP. This is Adenylosuccinate synthetase from Bacillus cereus (strain ZK / E33L).